We begin with the raw amino-acid sequence, 800 residues long: Structural protein ORF800 (800 aa).

4 coiled-coil regions span residues 98 to 130 (AENI…YNLA), 447 to 475 (LLAE…ANNL), 514 to 567 (AINQ…ANNL), and 606 to 633 (AINQ…NLLA). The interval 759 to 800 (AESIAESESETTESENNETTESTANSEGEKQEGEHGARLIRV) is disordered. The span at 761–776 (SIAESESETTESENNE) shows a compositional bias: acidic residues. Over residues 785-800 (EGEKQEGEHGARLIRV) the composition is skewed to basic and acidic residues.

The protein localises to the virion. This is Structural protein ORF800 from Acidianus convivator (ATV).